Here is a 462-residue protein sequence, read N- to C-terminus: Probable Xaa-Pro aminopeptidase pepP (462 aa).

The Mn(2+) site is built by Asp259, Asp270, Glu393, and Glu433.

The protein belongs to the peptidase M24B family. Requires Mn(2+) as cofactor.

The catalysed reaction is Release of any N-terminal amino acid, including proline, that is linked to proline, even from a dipeptide or tripeptide.. Its function is as follows. Catalyzes the removal of a penultimate prolyl residue from the N-termini of peptides. This is Probable Xaa-Pro aminopeptidase pepP (pepP) from Metarhizium robertsii (strain ARSEF 23 / ATCC MYA-3075) (Metarhizium anisopliae (strain ARSEF 23)).